A 169-amino-acid chain; its full sequence is Ureidoglycolate lyase (169 aa).

It belongs to the ureidoglycolate lyase family. As to quaternary structure, homodimer. Requires Ni(2+) as cofactor.

It catalyses the reaction (S)-ureidoglycolate = urea + glyoxylate. It functions in the pathway nitrogen metabolism; (S)-allantoin degradation. Its function is as follows. Catalyzes the catabolism of the allantoin degradation intermediate (S)-ureidoglycolate, generating urea and glyoxylate. Involved in the utilization of allantoin as nitrogen source. The chain is Ureidoglycolate lyase from Brucella melitensis biotype 2 (strain ATCC 23457).